The sequence spans 61 residues: Large ribosomal subunit protein bL28A (61 aa).

Belongs to the bacterial ribosomal protein bL28 family.

The protein is Large ribosomal subunit protein bL28A (rpmB1) of Streptomyces coelicolor (strain ATCC BAA-471 / A3(2) / M145).